Reading from the N-terminus, the 461-residue chain is Cysteine--tRNA ligase (461 aa).

Cys27 lines the Zn(2+) pocket. The 'HIGH' region signature appears at 29–39 (ITVYDYCHIGH). The Zn(2+) site is built by Cys208, His233, and Glu237. A 'KMSKS' region motif is present at residues 265–269 (KMSKS). Residue Lys268 coordinates ATP.

Belongs to the class-I aminoacyl-tRNA synthetase family. Monomer. Zn(2+) is required as a cofactor.

It is found in the cytoplasm. It catalyses the reaction tRNA(Cys) + L-cysteine + ATP = L-cysteinyl-tRNA(Cys) + AMP + diphosphate. The chain is Cysteine--tRNA ligase from Chromohalobacter salexigens (strain ATCC BAA-138 / DSM 3043 / CIP 106854 / NCIMB 13768 / 1H11).